We begin with the raw amino-acid sequence, 155 residues long: Conopressin/neurophysin (155 aa).

The N-terminal stretch at 1–26 is a signal peptide; sequence MMSSLCGMPLTYLLTAAVLSLSLTDA. A disulfide bond links Cys-27 and Cys-32. Glycine amide is present on Gly-35. 7 disulfide bridges follow: Cys-50–Cys-94, Cys-53–Cys-67, Cys-61–Cys-84, Cys-68–Cys-74, Cys-101–Cys-115, Cys-109–Cys-127, and Cys-116–Cys-121. N-linked (GlcNAc...) asparagine glycosylation occurs at Asn-88.

Belongs to the vasopressin/oxytocin family. In terms of processing, seven disulfide bonds are present in neurophysin.

It is found in the secreted. The chain is Conopressin/neurophysin from Lymnaea stagnalis (Great pond snail).